We begin with the raw amino-acid sequence, 529 residues long: Probable feruloyl esterase B-1 (529 aa).

The N-terminal stretch at methionine 1–alanine 19 is a signal peptide. Intrachain disulfides connect cysteine 27/cysteine 75 and cysteine 63/cysteine 114. Asparagine 53, asparagine 64, asparagine 85, asparagine 98, and asparagine 138 each carry an N-linked (GlcNAc...) asparagine glycan. Cystine bridges form between cysteine 187/cysteine 445, cysteine 256/cysteine 273, cysteine 282/cysteine 295, and cysteine 505/cysteine 527. The active-site Acyl-ester intermediate is the serine 188. The N-linked (GlcNAc...) asparagine glycan is linked to asparagine 233. Residues aspartate 257, aspartate 260, alanine 262, aspartate 264, and leucine 266 each contribute to the Ca(2+) site. Asparagine 286, asparagine 290, and asparagine 354 each carry an N-linked (GlcNAc...) asparagine glycan. Catalysis depends on charge relay system residues aspartate 404 and histidine 444.

It belongs to the tannase family.

The protein resides in the secreted. It carries out the reaction feruloyl-polysaccharide + H2O = ferulate + polysaccharide.. Its function is as follows. Involved in degradation of plant cell walls. Hydrolyzes the feruloyl-arabinose ester bond in arabinoxylans as well as the feruloyl-galactose and feruloyl-arabinose ester bonds in pectin. The polypeptide is Probable feruloyl esterase B-1 (faeB-1) (Aspergillus terreus (strain NIH 2624 / FGSC A1156)).